A 228-amino-acid chain; its full sequence is Tol-Pal system protein TolQ (228 aa).

Helical transmembrane passes span 16 to 36 (IVVQLVIVILISFSIISWAII), 137 to 157 (VSPYIGLFGTVWGIMHAFMAL), and 172 to 192 (IAEALIATAIGLFAAIPAVMA).

Belongs to the ExbB/TolQ family. The Tol-Pal system is composed of five core proteins: the inner membrane proteins TolA, TolQ and TolR, the periplasmic protein TolB and the outer membrane protein Pal. They form a network linking the inner and outer membranes and the peptidoglycan layer.

It is found in the cell inner membrane. Part of the Tol-Pal system, which plays a role in outer membrane invagination during cell division and is important for maintaining outer membrane integrity. This chain is Tol-Pal system protein TolQ, found in Haemophilus influenzae (strain ATCC 51907 / DSM 11121 / KW20 / Rd).